The following is a 420-amino-acid chain: Serine hydroxymethyltransferase (420 aa).

(6S)-5,6,7,8-tetrahydrofolate is bound by residues Leu121 and 125-127; that span reads GHL. The residue at position 230 (Lys230) is an N6-(pyridoxal phosphate)lysine. (6S)-5,6,7,8-tetrahydrofolate contacts are provided by residues Glu246 and 354-356; that span reads SPF.

It belongs to the SHMT family. Homodimer. The cofactor is pyridoxal 5'-phosphate.

Its subcellular location is the cytoplasm. It catalyses the reaction (6R)-5,10-methylene-5,6,7,8-tetrahydrofolate + glycine + H2O = (6S)-5,6,7,8-tetrahydrofolate + L-serine. It functions in the pathway one-carbon metabolism; tetrahydrofolate interconversion. Its pathway is amino-acid biosynthesis; glycine biosynthesis; glycine from L-serine: step 1/1. In terms of biological role, catalyzes the reversible interconversion of serine and glycine with tetrahydrofolate (THF) serving as the one-carbon carrier. This reaction serves as the major source of one-carbon groups required for the biosynthesis of purines, thymidylate, methionine, and other important biomolecules. Also exhibits THF-independent aldolase activity toward beta-hydroxyamino acids, producing glycine and aldehydes, via a retro-aldol mechanism. The chain is Serine hydroxymethyltransferase from Rickettsia canadensis (strain McKiel).